A 142-amino-acid chain; its full sequence is DNA polymerase III subunit chi (142 aa).

Belongs to the DNA polymerase III chi/HolC chain family. As to quaternary structure, DNA polymerase III contains a core (composed of alpha, epsilon and theta chains) that associates with a tau subunit. This core dimerizes to form the POLIII' complex. PolIII' associates with the gamma complex (composed of gamma, delta, delta', psi and chi chains) and with the beta chain to form the complete DNA polymerase III complex. Interacts directly with the psi subunit (holD). The only subunit of the DNA polymerase III holoenzyme known to interact with single-stranded DNA binding protein (SSB).

The catalysed reaction is DNA(n) + a 2'-deoxyribonucleoside 5'-triphosphate = DNA(n+1) + diphosphate. Its function is as follows. Part of the beta sliding clamp loading complex, which hydrolyzes ATP to load the beta clamp onto primed DNA to form the DNA replication pre-initiation complex. DNA polymerase III is a complex, multichain enzyme responsible for most of the replicative synthesis in bacteria. This DNA polymerase also exhibits 3' to 5' exonuclease activity. The protein is DNA polymerase III subunit chi of Pseudomonas aeruginosa (strain ATCC 15692 / DSM 22644 / CIP 104116 / JCM 14847 / LMG 12228 / 1C / PRS 101 / PAO1).